The primary structure comprises 46 residues: Mu-segestritoxin-Sf1c (46 aa).

4 cysteine pairs are disulfide-bonded: C3–C19, C10–C22, C18–C42, and C24–C40. Positions 31 to 33 are keys region for toxin activity; that stretch reads RPW.

This sequence belongs to the neurotoxin 16 (SFI) family. Expressed by the venom gland.

Its subcellular location is the secreted. Insecticidal toxin. It inhibits insect voltage-gated sodium channels (Nav) by partially blocking the channel pore in DUM neurons from the American cockroach, not by acting as a gating modifier. The inhibition is only partially reversible after prolonged washout. In vivo, the toxin causes flaccid paralysis followed by death when injected into Heliothis virescens larvae. It also causes uncoordinated movements followed by full paralysis to sheep blowflies (Lucilia cuprina). When the toxin is fused to snowdrop lectin, it is orally active against larvae of the tomato moth (Laconobia oleracea), the rice brown planthopper (Nilaparvata lugens), and the peach-potato aphid (Myzus persicae). This chain is Mu-segestritoxin-Sf1c, found in Segestria florentina (Tube-web spider).